A 375-amino-acid polypeptide reads, in one-letter code: Carbamoyl phosphate synthase small chain (375 aa).

The interval 1–184 (MVSLYLENGL…LDYKPFDEKT (184 aa)) is CPSase. Positions 44, 240, and 242 each coordinate L-glutamine. The Glutamine amidotransferase type-1 domain maps to 188–375 (IIAVLDFGAK…KEFVELLKDF (188 aa)). Residue cysteine 268 is the Nucleophile of the active site. L-glutamine-binding residues include leucine 269, glutamine 272, asparagine 310, and tyrosine 313. Active-site residues include histidine 351 and glutamate 353.

Belongs to the CarA family. In terms of assembly, composed of two chains; the small (or glutamine) chain promotes the hydrolysis of glutamine to ammonia, which is used by the large (or ammonia) chain to synthesize carbamoyl phosphate. Tetramer of heterodimers (alpha,beta)4.

The catalysed reaction is hydrogencarbonate + L-glutamine + 2 ATP + H2O = carbamoyl phosphate + L-glutamate + 2 ADP + phosphate + 2 H(+). The enzyme catalyses L-glutamine + H2O = L-glutamate + NH4(+). Its pathway is amino-acid biosynthesis; L-arginine biosynthesis; carbamoyl phosphate from bicarbonate: step 1/1. The protein operates within pyrimidine metabolism; UMP biosynthesis via de novo pathway; (S)-dihydroorotate from bicarbonate: step 1/3. Functionally, small subunit of the glutamine-dependent carbamoyl phosphate synthetase (CPSase). CPSase catalyzes the formation of carbamoyl phosphate from the ammonia moiety of glutamine, carbonate, and phosphate donated by ATP, constituting the first step of 2 biosynthetic pathways, one leading to arginine and/or urea and the other to pyrimidine nucleotides. The small subunit (glutamine amidotransferase) binds and cleaves glutamine to supply the large subunit with the substrate ammonia. This Helicobacter pylori (strain ATCC 700392 / 26695) (Campylobacter pylori) protein is Carbamoyl phosphate synthase small chain.